The sequence spans 337 residues: MKVTVLVGGVGGARFLLGVQQLFGLGQFRAQRHTHGRPDTAAGSHELTAIVNIGDDAWIHGLRVCPDLDTCMYTLGGGVDPERGWGHRDETWHAKEELARYGVQPDWFGLGDRDIGTHLVRTQMLNAGYPLTQITAALCDRWQPGARLLPVSDDRCETHVVITDPDDGSRRAIHFQEWWVRYRAQVPTHSFAFVGAEKAAATTETIAAIADADVILIAPSNPVVSVGAILAVPGVRGALRAAGAPIVGYSPIIGGKPLRGMADACLSVIGVESTAEAVGRHYGARRGTGILDCWLVSQDDHADIEGVAVRAVPLMMTDPAATAEMVSAGLQLAGVTP.

D69 serves as a coordination point for 7,8-didemethyl-8-hydroxy-5-deazariboflavin.

It belongs to the CofD family. Homodimer. Mg(2+) is required as a cofactor.

The enzyme catalyses enolpyruvoyl-2-diphospho-5'-guanosine + 7,8-didemethyl-8-hydroxy-5-deazariboflavin = dehydro coenzyme F420-0 + GMP + H(+). It functions in the pathway cofactor biosynthesis; coenzyme F420 biosynthesis. In terms of biological role, catalyzes the transfer of the phosphoenolpyruvate moiety from enoylpyruvoyl-2-diphospho-5'-guanosine (EPPG) to 7,8-didemethyl-8-hydroxy-5-deazariboflavin (FO) with the formation of dehydro coenzyme F420-0 and GMP. This chain is Phosphoenolpyruvate transferase, found in Mycobacterium avium (strain 104).